Reading from the N-terminus, the 216-residue chain is MMELYRAAVQLIVGVGLGVGLWLREAQGERHIVFWNSSNYRFMQEDYTVQVQLNDYLDIVCPYYEEGSVAGHTVERYTLFLVDYEEYETCKPKSKDQVRWECNKPFAPHGPEKFCEKFQKFTPFTLGTEFREGRTYYYISKPIHYHGETCMRLRVHVSGRTTPPPVNVHTPRSHIQSDEPEVPLPGVMKSVAGNSAAPGTPCTLYGLLLAALLLRL.

An N-terminal signal peptide occupies residues 1–28; sequence MMELYRAAVQLIVGVGLGVGLWLREAQG. Positions 29-161 constitute an Ephrin RBD domain; sequence ERHIVFWNSS…RLRVHVSGRT (133 aa). Asn-36 is a glycosylation site (N-linked (GlcNAc...) asparagine). A disulfide bridge connects residues Cys-61 and Cys-102. The tract at residues 162–181 is disordered; it reads TPPPVNVHTPRSHIQSDEPE. Ser-195 carries the GPI-anchor amidated serine lipid modification. The propeptide at 196–216 is removed in mature form; sequence AAPGTPCTLYGLLLAALLLRL.

It belongs to the ephrin family. In terms of assembly, binds to the receptor tyrosine kinases EPHA2, EPHA4, EPHA5, EPHA6 and EPHA7. Also binds with low affinity to EPHA1.

Its subcellular location is the membrane. Its function is as follows. Cell surface GPI-bound ligand for Eph receptors, a family of receptor tyrosine kinases which are crucial for migration, repulsion and adhesion during neuronal, vascular and epithelial development. Binds promiscuously Eph receptors residing on adjacent cells, leading to contact-dependent bidirectional signaling into neighboring cells. In Xenopus laevis (African clawed frog), this protein is Ephrin-A1 (efna1).